A 149-amino-acid chain; its full sequence is Large ribosomal subunit protein bL9 (149 aa).

The protein belongs to the bacterial ribosomal protein bL9 family.

Binds to the 23S rRNA. The sequence is that of Large ribosomal subunit protein bL9 from Tolumonas auensis (strain DSM 9187 / NBRC 110442 / TA 4).